We begin with the raw amino-acid sequence, 185 residues long: Translation initiation factor IF-3 (185 aa).

It belongs to the IF-3 family. In terms of assembly, monomer.

It is found in the cytoplasm. Functionally, IF-3 binds to the 30S ribosomal subunit and shifts the equilibrium between 70S ribosomes and their 50S and 30S subunits in favor of the free subunits, thus enhancing the availability of 30S subunits on which protein synthesis initiation begins. The chain is Translation initiation factor IF-3 from Bacteroides thetaiotaomicron (strain ATCC 29148 / DSM 2079 / JCM 5827 / CCUG 10774 / NCTC 10582 / VPI-5482 / E50).